The sequence spans 194 residues: N-acetyltransferase (194 aa).

An N-acetyltransferase domain is found at 9–173 (PQVRPGIAED…GRYWDVRWYE (165 aa)).

It belongs to the acetyltransferase family. PAT/BAR subfamily.

This chain is N-acetyltransferase (nat), found in Streptomyces griseus.